A 521-amino-acid chain; its full sequence is Histidine--tRNA ligase (521 aa).

L-histidine-binding positions include 137–139, Arg-164, Gln-180, Asp-184, Arg-338, and 342–343; these read DLT and YY.

The protein belongs to the class-II aminoacyl-tRNA synthetase family.

The enzyme catalyses tRNA(His) + L-histidine + ATP = L-histidyl-tRNA(His) + AMP + diphosphate + H(+). Its function is as follows. Involved in protein synthesis. Catalyzes the specific attachment of an amino acid to its cognate tRNA in a 2 step reaction: the amino acid (AA) is first activated by ATP to form AA-AMP and then transferred to the acceptor end of the tRNA. Required for germ cell development. The chain is Histidine--tRNA ligase from Caenorhabditis elegans.